Reading from the N-terminus, the 311-residue chain is Probable manganese-dependent inorganic pyrophosphatase (311 aa).

Mn(2+) contacts are provided by His-9, Asp-13, Asp-15, Asp-77, His-99, and Asp-151.

Belongs to the PPase class C family. It depends on Mn(2+) as a cofactor.

Its subcellular location is the cytoplasm. The catalysed reaction is diphosphate + H2O = 2 phosphate + H(+). The chain is Probable manganese-dependent inorganic pyrophosphatase from Streptococcus sanguinis (strain SK36).